The chain runs to 256 residues: Hydroxyacylglutathione hydrolase (256 aa).

Positions 55, 57, 59, 60, 113, 132, and 170 each coordinate Zn(2+).

It belongs to the metallo-beta-lactamase superfamily. Glyoxalase II family. Monomer. The cofactor is Zn(2+).

It catalyses the reaction an S-(2-hydroxyacyl)glutathione + H2O = a 2-hydroxy carboxylate + glutathione + H(+). The protein operates within secondary metabolite metabolism; methylglyoxal degradation; (R)-lactate from methylglyoxal: step 2/2. Its function is as follows. Thiolesterase that catalyzes the hydrolysis of S-D-lactoyl-glutathione to form glutathione and D-lactic acid. In Methylococcus capsulatus (strain ATCC 33009 / NCIMB 11132 / Bath), this protein is Hydroxyacylglutathione hydrolase.